The following is a 167-amino-acid chain: SsrA-binding protein (167 aa).

A compositionally biased stretch (basic and acidic residues) spans 139 to 158 (QNHDKRDAAKERDWQRDKQR). The disordered stretch occupies residues 139-167 (QNHDKRDAAKERDWQRDKQRVMRRHNRDA).

The protein belongs to the SmpB family.

It localises to the cytoplasm. Required for rescue of stalled ribosomes mediated by trans-translation. Binds to transfer-messenger RNA (tmRNA), required for stable association of tmRNA with ribosomes. tmRNA and SmpB together mimic tRNA shape, replacing the anticodon stem-loop with SmpB. tmRNA is encoded by the ssrA gene; the 2 termini fold to resemble tRNA(Ala) and it encodes a 'tag peptide', a short internal open reading frame. During trans-translation Ala-aminoacylated tmRNA acts like a tRNA, entering the A-site of stalled ribosomes, displacing the stalled mRNA. The ribosome then switches to translate the ORF on the tmRNA; the nascent peptide is terminated with the 'tag peptide' encoded by the tmRNA and targeted for degradation. The ribosome is freed to recommence translation, which seems to be the essential function of trans-translation. The chain is SsrA-binding protein from Xanthomonas oryzae pv. oryzae (strain PXO99A).